A 158-amino-acid chain; its full sequence is MGIEGVLKEGVVTTSADKLINWARTGSLWPMTFGLACCAVEMMHAGASRYDLDRFGIIFRPSPRQSDVMIVAGTLVNKMAPALRKVYDQMAEPRWVISMGSCANGGGYYHYSYSVVRGCDRIVPVDVYVPGCPPTAEALLYGIIQLQNKIKRTNTIAR.

[4Fe-4S] cluster contacts are provided by C37, C38, C102, and C132.

Belongs to the complex I 20 kDa subunit family. In terms of assembly, NDH-1 is composed of 14 different subunits. Subunits NuoB, C, D, E, F, and G constitute the peripheral sector of the complex. It depends on [4Fe-4S] cluster as a cofactor.

It is found in the cell inner membrane. It catalyses the reaction a quinone + NADH + 5 H(+)(in) = a quinol + NAD(+) + 4 H(+)(out). NDH-1 shuttles electrons from NADH, via FMN and iron-sulfur (Fe-S) centers, to quinones in the respiratory chain. Couples the redox reaction to proton translocation (for every two electrons transferred, four hydrogen ions are translocated across the cytoplasmic membrane), and thus conserves the redox energy in a proton gradient. In Hydrogenovibrio crunogenus (strain DSM 25203 / XCL-2) (Thiomicrospira crunogena), this protein is NADH-quinone oxidoreductase subunit B.